Consider the following 235-residue polypeptide: Leucyl/phenylalanyl-tRNA--protein transferase (235 aa).

The protein belongs to the L/F-transferase family.

Its subcellular location is the cytoplasm. The enzyme catalyses N-terminal L-lysyl-[protein] + L-leucyl-tRNA(Leu) = N-terminal L-leucyl-L-lysyl-[protein] + tRNA(Leu) + H(+). It carries out the reaction N-terminal L-arginyl-[protein] + L-leucyl-tRNA(Leu) = N-terminal L-leucyl-L-arginyl-[protein] + tRNA(Leu) + H(+). The catalysed reaction is L-phenylalanyl-tRNA(Phe) + an N-terminal L-alpha-aminoacyl-[protein] = an N-terminal L-phenylalanyl-L-alpha-aminoacyl-[protein] + tRNA(Phe). Functionally, functions in the N-end rule pathway of protein degradation where it conjugates Leu, Phe and, less efficiently, Met from aminoacyl-tRNAs to the N-termini of proteins containing an N-terminal arginine or lysine. The chain is Leucyl/phenylalanyl-tRNA--protein transferase from Magnetococcus marinus (strain ATCC BAA-1437 / JCM 17883 / MC-1).